A 344-amino-acid polypeptide reads, in one-letter code: Ferrochelatase (344 aa).

Fe cation contacts are provided by His-211 and Glu-292.

This sequence belongs to the ferrochelatase family.

It localises to the cytoplasm. It carries out the reaction heme b + 2 H(+) = protoporphyrin IX + Fe(2+). Its pathway is porphyrin-containing compound metabolism; protoheme biosynthesis; protoheme from protoporphyrin-IX: step 1/1. Functionally, catalyzes the ferrous insertion into protoporphyrin IX. The sequence is that of Ferrochelatase from Methylobacillus flagellatus (strain ATCC 51484 / DSM 6875 / VKM B-1610 / KT).